The chain runs to 427 residues: Inward rectifier potassium channel 2 (427 aa).

The Cytoplasmic segment spans residues 1 to 81 (MGSVRTNRYS…IFTTCVDIRW (81 aa)). The residue at position 76 (C76) is an S-nitrosocysteine. Residues 82–106 (RWMLVIFCLAFVLSWLFFGCVFWLI) form a helical membrane-spanning segment. At 107–128 (ALLHGDLDASKESKACVSEVNS) the chain is on the extracellular side. Residues 129-140 (FTAAFLFSIETQ) constitute an intramembrane region (helical; Pore-forming). Residues 141 to 147 (TTIGYGF) constitute an intramembrane region (pore-forming). The Selectivity filter motif lies at 142 to 147 (TIGYGF). The Extracellular segment spans residues 148 to 156 (RCVTDECPV). Residues 157 to 178 (AVFMVVFQSIVGCIIDAFIIGA) form a helical membrane-spanning segment. The Cytoplasmic segment spans residues 179–427 (VMAKMAKPKK…PRPLRRESEI (249 aa)). Residues 181 to 208 (AKMAKPKKRNETLVFSHNAVIAMRDGKL) are polyphosphoinositide (PIP2)-binding. The disordered stretch occupies residues 384-427 (SKEEDDSENGVPESTSTDTPPDIDLHNQASVPLEPRPLRRESEI). The short motif at 425 to 427 (SEI) is the PDZ-binding element.

The protein belongs to the inward rectifier-type potassium channel (TC 1.A.2.1) family. KCNJ2 subfamily. Homotetramer. Homomultimeric and heteromultimeric association with KCNJ4/Kir2.3. Can form heteromeric channels with Kir2.6/KCNJ18. Associates, via its PDZ-recognition domain, with a complex containing LIN7A, LIN7B, LIN7C, DLG1, CASK and APBA1. Post-translationally, S-nitrosylation increases the open probability and inward rectifying currents.

It is found in the cell membrane. Its subcellular location is the sarcolemma. The protein localises to the T-tubule. The enzyme catalyses K(+)(in) = K(+)(out). Its activity is regulated as follows. Activated by phosphatidylinositol 4,5 biphosphate (PtdIns(4,5)P2). Its function is as follows. Inward rectifier potassium channels are characterized by a greater tendency to allow potassium to flow into the cell rather than out of it. Their voltage dependence is regulated by the concentration of extracellular potassium; as external potassium is raised, the voltage range of the channel opening shifts to more positive voltages. The inward rectification is mainly due to the blockage of outward current by internal magnesium. Can be blocked by extracellular barium and cesium. Probably participates in establishing action potential waveform and excitability of neuronal and muscle tissues. This is Inward rectifier potassium channel 2 (KCNJ2) from Bos taurus (Bovine).